Consider the following 64-residue polypeptide: SPbeta prophage-derived uncharacterized protein YoqI (64 aa).

This is SPbeta prophage-derived uncharacterized protein YoqI (yoqI) from Bacillus subtilis (strain 168).